The primary structure comprises 161 residues: Nucleotide-binding protein BceJ2315_27070 (161 aa).

It belongs to the YajQ family.

Functionally, nucleotide-binding protein. The protein is Nucleotide-binding protein BceJ2315_27070 of Burkholderia cenocepacia (strain ATCC BAA-245 / DSM 16553 / LMG 16656 / NCTC 13227 / J2315 / CF5610) (Burkholderia cepacia (strain J2315)).